The primary structure comprises 346 residues: E3 ubiquitin-protein ligase MARCHF9 (346 aa).

2 disordered regions span residues 20 to 39 (GGGR…GGCG) and 47 to 92 (STRD…PGAL). Over residues 63–75 (PRARGLAGDKEPR) the composition is skewed to basic and acidic residues. A compositionally biased stretch (pro residues) spans 77 to 90 (GPLPPPAPPLPPPG). The segment at 102-162 (DSGLRTPQCR…ELCYFKYQVL (61 aa)) adopts an RING-CH-type zinc-finger fold. Residues Cys110, Cys113, Cys126, Cys128, His136, Cys139, Cys152, and Cys155 each contribute to the Zn(2+) site. Helical transmembrane passes span 185–205 (IAAI…LIWS) and 219–239 (LFQI…GLII). Disordered stretches follow at residues 273–301 (DAGG…RPPA) and 326–346 (PPDA…VTTV). A compositionally biased stretch (polar residues) spans 284–296 (PRNSRTGPTSGAT).

In terms of assembly, homodimer. Ubiquitously expressed.

The protein localises to the golgi apparatus membrane. It is found in the lysosome membrane. The catalysed reaction is S-ubiquitinyl-[E2 ubiquitin-conjugating enzyme]-L-cysteine + [acceptor protein]-L-lysine = [E2 ubiquitin-conjugating enzyme]-L-cysteine + N(6)-ubiquitinyl-[acceptor protein]-L-lysine.. It functions in the pathway protein modification; protein ubiquitination. In terms of biological role, E3 ubiquitin-protein ligase that may mediate ubiquitination of MHC-I, CD4 and ICAM1, and promote their subsequent endocytosis and sorting to lysosomes via multivesicular bodies. E3 ubiquitin ligases accept ubiquitin from an E2 ubiquitin-conjugating enzyme in the form of a thioester and then directly transfer the ubiquitin to targeted substrates. The protein is E3 ubiquitin-protein ligase MARCHF9 of Homo sapiens (Human).